We begin with the raw amino-acid sequence, 238 residues long: Ribonuclease PH (238 aa).

Phosphate contacts are provided by residues R86 and G124–R126.

The protein belongs to the RNase PH family. As to quaternary structure, homohexameric ring arranged as a trimer of dimers.

The catalysed reaction is tRNA(n+1) + phosphate = tRNA(n) + a ribonucleoside 5'-diphosphate. Its function is as follows. Phosphorolytic 3'-5' exoribonuclease that plays an important role in tRNA 3'-end maturation. Removes nucleotide residues following the 3'-CCA terminus of tRNAs; can also add nucleotides to the ends of RNA molecules by using nucleoside diphosphates as substrates, but this may not be physiologically important. Probably plays a role in initiation of 16S rRNA degradation (leading to ribosome degradation) during starvation. The chain is Ribonuclease PH from Psychrobacter sp. (strain PRwf-1).